Reading from the N-terminus, the 239-residue chain is Glycerol-3-phosphate acyltransferase (239 aa).

6 consecutive transmembrane segments (helical) span residues 6 to 26 (AIALLIVFSLVIGYLMGSVMF), 61 to 81 (FLVGLCDALKGFLAFVFSFLI), 99 to 119 (YYLTYLSCFAATIGHIFPLYF), 135 to 155 (LAISLWWFVICLVLWLLVTLI), 159 to 179 (VSLASLVTFFILAIIILVPWL), and 199 to 219 (WYIILFFVLWYWPLTIAVFWL).

This sequence belongs to the PlsY family. As to quaternary structure, probably interacts with PlsX.

The protein localises to the cell membrane. It catalyses the reaction an acyl phosphate + sn-glycerol 3-phosphate = a 1-acyl-sn-glycero-3-phosphate + phosphate. It participates in lipid metabolism; phospholipid metabolism. In terms of biological role, catalyzes the transfer of an acyl group from acyl-phosphate (acyl-PO(4)) to glycerol-3-phosphate (G3P) to form lysophosphatidic acid (LPA). This enzyme utilizes acyl-phosphate as fatty acyl donor, but not acyl-CoA or acyl-ACP. The chain is Glycerol-3-phosphate acyltransferase from Mycoplasma pneumoniae (strain ATCC 29342 / M129 / Subtype 1) (Mycoplasmoides pneumoniae).